Here is a 599-residue protein sequence, read N- to C-terminus: Purine-uracil permease NCS1 (599 aa).

12 consecutive transmembrane segments (helical) span residues 140–160, 164–184, 218–238, 257–277, 293–313, 327–347, 363–383, 411–433, 445–465, 474–494, 525–545, and 560–580; these read LWIG…LVDL, WWQG…PLVL, LVGC…IFLL, TSPL…CIVW, ILIS…GGFG, FWTL…TLAL, IIGQ…GVAV, TLLA…NVVA, FFTF…FQPW, FVYT…GIIL, YNVA…PGFL, and VVYD…YWII.

This sequence belongs to the purine-cytosine permease (2.A.39) family. In terms of tissue distribution, expressed in roots, leaves, stems, flowers, siliques and seeds.

Its subcellular location is the plastid. It localises to the chloroplast envelope. The protein resides in the chloroplast membrane. Functionally, nucleobase-proton symporter that facilitates the uptake of nucleobases in the cells. Can transport adenine, guanine and uracil. Contributes to uracil import into plastids for plastidic uracil salvage which is essential for plant growth and development. This chain is Purine-uracil permease NCS1, found in Arabidopsis thaliana (Mouse-ear cress).